The following is a 476-amino-acid chain: Cobyric acid synthase (476 aa).

The region spanning 242–428 (AFRVVVPVPP…LHGLFDTPDA (187 aa)) is the GATase cobBQ-type domain. Catalysis depends on C323, which acts as the Nucleophile. Residue H420 is part of the active site.

This sequence belongs to the CobB/CobQ family. CobQ subfamily.

It functions in the pathway cofactor biosynthesis; adenosylcobalamin biosynthesis. Functionally, catalyzes amidations at positions B, D, E, and G on adenosylcobyrinic A,C-diamide. NH(2) groups are provided by glutamine, and one molecule of ATP is hydrogenolyzed for each amidation. The polypeptide is Cobyric acid synthase (Janthinobacterium sp. (strain Marseille) (Minibacterium massiliensis)).